The primary structure comprises 590 residues: MELENIVANTVLLKAREGGGGKRKGKSKKWKEILKFPHISQCEDLRRTIDRDYCSLCDKQPIGRLLFRQFCETRPGLECYIQFLDSVAEYEVTPDEKLGEKGKEIMTKYLTPKSPVFIAQVGQDLVSQTEEKLLQKPCKELFSACAQSVHEYLRGEPFHEYLDSMFFDRFLQWKWLERQPVTKNTFRQYRVLGKGGFGEVCACQVRATGKMYACKRLEKKRIKKRKGESMALNEKQILEKVNSQFVVNLAYAYETKDALCLVLTIMNGGDLKFHIYNMGNPGFEEERALFYAAEILCGLEDLHRENTVYRDLKPENILLDDYGHIRISDLGLAVKIPEGDLIRGRVGTVGYMAPEVLNNQRYGLSPDYWGLGCLIYEMIEGQSPFRGRKEKVKREEVDRRVLETEEVYSHKFSEEAKSICKMLLTKDAKQRLGCQEEGAAEVKRHPFFRNMNFKRLEAGMLDPPFVPDPRAVYCKDVLDIEQFSTVKGVNLDHTDDDFYSKFSTGSVSIPWQNEMIETECFKELNVFGPNGTLPPDLNRNHPPEPPKKGLLQRLFKRQHQNNSKSSPSSKTSFNHHINSNHVSSNSTGSS.

Residues 1 to 185 (MELENIVANT…LERQPVTKNT (185 aa)) form an N-terminal region. The segment at 20–39 (GGKRKGKSKKWKEILKFPHI) is interaction with calmodulin. Residues 53-171 (YCSLCDKQPI…LDSMFFDRFL (119 aa)) enclose the RGS domain. The region spanning 186–448 (FRQYRVLGKG…AAEVKRHPFF (263 aa)) is the Protein kinase domain. ATP-binding positions include 192–200 (LGKGGFGEV) and K215. D311 acts as the Proton acceptor in catalysis. Positions 388–395 (RKEKVKRE) match the Nuclear localization signal motif. One can recognise an AGC-kinase C-terminal domain in the interval 449-514 (RNMNFKRLEA…GSVSIPWQNE (66 aa)). S484 is modified (phosphoserine; by autocatalysis). Residue T485 is modified to Phosphothreonine; by autocatalysis. The segment at 531–590 (GTLPPDLNRNHPPEPPKKGLLQRLFKRQHQNNSKSSPSSKTSFNHHINSNHVSSNSTGSS) is disordered. Basic and acidic residues predominate over residues 538–547 (NRNHPPEPPK). The tract at residues 546-565 (PKKGLLQRLFKRQHQNNSKS) is sufficient for membrane localization. Positions 563-590 (SKSSPSSKTSFNHHINSNHVSSNSTGSS) are enriched in low complexity. S579 carries the phosphoserine modification.

It belongs to the protein kinase superfamily. AGC Ser/Thr protein kinase family. GPRK subfamily. Interacts with ST13 (via the C-terminus 303-319 AA). Interacts with TP53/p53. Interacts with HTR4 (via C-terminus 330-346 AA); this interaction is promoted by 5-HT (serotonin). Interacts with HDAC5. Interacts with GIT1. Post-translationally, autophosphorylated. Autophosphorylation may play a critical role in the regulation of GRK5 kinase activity. Highest levels in heart, placenta, lung &gt; skeletal muscle &gt; brain, liver, pancreas &gt; kidney.

It is found in the cytoplasm. It localises to the nucleus. The protein localises to the cell membrane. It carries out the reaction [G-protein-coupled receptor] + ATP = [G-protein-coupled receptor]-phosphate + ADP + H(+). Its activity is regulated as follows. Inhibited by calmodulin with an IC(50) of 50 nM. Calmodulin inhibits GRK5 association with receptor and phospholipid. Its function is as follows. Serine/threonine kinase that phosphorylates preferentially the activated forms of a variety of G-protein-coupled receptors (GPCRs). Such receptor phosphorylation initiates beta-arrestin-mediated receptor desensitization, internalization, and signaling events leading to their down-regulation. Phosphorylates a variety of GPCRs, including adrenergic receptors, muscarinic acetylcholine receptors (more specifically Gi-coupled M2/M4 subtypes), dopamine receptors and opioid receptors. In addition to GPCRs, also phosphorylates various substrates: Hsc70-interacting protein/ST13, TP53/p53, HDAC5, and arrestin-1/ARRB1. Phosphorylation of ARRB1 by GRK5 inhibits G-protein independent MAPK1/MAPK3 signaling downstream of 5HT4-receptors. Phosphorylation of HDAC5, a repressor of myocyte enhancer factor 2 (MEF2) leading to nuclear export of HDAC5 and allowing MEF2-mediated transcription. Phosphorylation of TP53/p53, a crucial tumor suppressor, inhibits TP53/p53-mediated apoptosis. Phosphorylation of ST13 regulates internalization of the chemokine receptor. Phosphorylates rhodopsin (RHO) (in vitro) and a non G-protein-coupled receptor, LRP6 during Wnt signaling (in vitro). In Homo sapiens (Human), this protein is G protein-coupled receptor kinase 5 (GRK5).